A 151-amino-acid chain; its full sequence is Ribonuclease H (151 aa).

Residues 1–146 (MPDLYAYTDG…ADELARAGMA (146 aa)) form the RNase H type-1 domain. Mg(2+) is bound by residues D9, E52, D74, and D138.

This sequence belongs to the RNase H family. As to quaternary structure, monomer. The cofactor is Mg(2+).

Its subcellular location is the cytoplasm. It carries out the reaction Endonucleolytic cleavage to 5'-phosphomonoester.. Functionally, endonuclease that specifically degrades the RNA of RNA-DNA hybrids. The sequence is that of Ribonuclease H from Cereibacter sphaeroides (strain ATCC 17029 / ATH 2.4.9) (Rhodobacter sphaeroides).